The primary structure comprises 887 residues: Integrator complex subunit 6 (887 aa).

A VWFA domain is found at 3-227 (ILLFLIDTSA…QCLESLVQKV (225 aa)). Positions 626–633 (MMIDEADE) match the Inhibitory loop motif. Serine 804 carries the phosphoserine modification.

The protein belongs to the Integrator subunit 6 family. Component of the Integrator complex, composed of core subunits INTS1, INTS2, INTS3, INTS4, INTS5, INTS6, INTS7, INTS8, INTS9/RC74, INTS10, INTS11/CPSF3L, INTS12, INTS13, INTS14 and INTS15. The core complex associates with protein phosphatase 2A subunits PPP2CA and PPP2R1A, to form the Integrator-PP2A (INTAC) complex. As to expression, widely expressed. Expressed in heart, brain, placenta, lung, liver, skeletal muscle, kidney and pancreas.

It is found in the nucleus. The protein resides in the chromosome. Component of the integrator complex, a multiprotein complex that terminates RNA polymerase II (Pol II) transcription in the promoter-proximal region of genes. The integrator complex provides a quality checkpoint during transcription elongation by driving premature transcription termination of transcripts that are unfavorably configured for transcriptional elongation: the complex terminates transcription by (1) catalyzing dephosphorylation of the C-terminal domain (CTD) of Pol II subunit POLR2A and SUPT5H/SPT5, (2) degrading the exiting nascent RNA transcript via endonuclease activity and (3) promoting the release of Pol II from bound DNA. The integrator complex is also involved in terminating the synthesis of non-coding Pol II transcripts, such as enhancer RNAs (eRNAs), small nuclear RNAs (snRNAs), telomerase RNAs and long non-coding RNAs (lncRNAs). Within the integrator complex, INTS6 acts as a molecular adapter that promotes assembly of protein phosphatase 2A (PP2A) subunits to the integrator core complex, promoting recruitment of PP2A to transcription pause-release checkpoint. Mediates recruitment of cytoplasmic dynein to the nuclear envelope, probably as component of the integrator complex. May have a tumor suppressor role; an ectopic expression suppressing tumor cell growth. The chain is Integrator complex subunit 6 from Homo sapiens (Human).